A 96-amino-acid polypeptide reads, in one-letter code: UPF0235 protein Tola_0962 (96 aa).

It belongs to the UPF0235 family.

The sequence is that of UPF0235 protein Tola_0962 from Tolumonas auensis (strain DSM 9187 / NBRC 110442 / TA 4).